Reading from the N-terminus, the 555-residue chain is Splicing factor U2af large subunit A (555 aa).

The tract at residues 1-165 is disordered; it reads MRDYEGNGVD…ISGFDMAPPT (165 aa). 2 stretches are compositionally biased toward basic and acidic residues: residues 23-81 and 90-127; these read ISRD…EKDR and RDRS…DRED. Basic residues predominate over residues 143 to 155; it reads SKSRSRSPSKSKR. 3 consecutive RRM domains span residues 221 to 304, 341 to 419, and 460 to 546; these read RRVY…RPSD, DRIF…RANQ, and EVVT…YPEN.

It belongs to the splicing factor SR family. Expressed in stems, leaves and apical buds.

Its subcellular location is the nucleus. In terms of biological role, necessary for the splicing of pre-mRNA. Binds to the U -enriched regions of plant introns. In Nicotiana plumbaginifolia (Leadwort-leaved tobacco), this protein is Splicing factor U2af large subunit A (U2AF65A).